An 88-amino-acid chain; its full sequence is Cell division topological specificity factor (88 aa).

The protein belongs to the MinE family.

Prevents the cell division inhibition by proteins MinC and MinD at internal division sites while permitting inhibition at polar sites. This ensures cell division at the proper site by restricting the formation of a division septum at the midpoint of the long axis of the cell. The polypeptide is Cell division topological specificity factor (Herminiimonas arsenicoxydans).